The following is a 349-amino-acid chain: Guanine nucleotide-binding protein-like alpha-10 subunit (349 aa).

Residues 33–349 (EEIRVLIYGQ…LNITYNSVKN (317 aa)) form the G-alpha domain. Positions 36–49 (RVLIYGQKKVGVTT) are G1 motif. A G2 motif region spans residues 168–176 (DLNFIKLTQ). The G3 motif stretch occupies residues 191–200 (IKMIEMGIQT). GTP-binding positions include 195–199 (EMGIQ) and 266–269 (NKKD). The segment at 262 to 269 (IVFFNKKD) is G4 motif. Positions 320 to 325 (NEESEV) are G5 motif.

This sequence belongs to the G-alpha family.

This chain is Guanine nucleotide-binding protein-like alpha-10 subunit (gpaJ), found in Dictyostelium discoideum (Social amoeba).